A 465-amino-acid chain; its full sequence is Putative multidrug resistance protein MdtD (465 aa).

A run of 12 helical transmembrane segments spans residues 12–32 (LWIVAFGFFMQTLDTTIVNTA), 49–69 (SVIVSYVLTVAVMLPASGWLA), 72–92 (IGVKWVFFSAIILFTFGSLMC), 138–158 (FVTLPGQIGPLVGPALGGFLV), 165–185 (WIFLINLPVGVIGALATLLLM), 195–215 (FDISGFIMLAIGMATLTLALD), 219–239 (GLGLSPLAIAGLILCGVIALG), 267–287 (LVGSMSARIGSGMLPFMTPIF), 290–310 (IGLGFSPFHAGLMMIPMIIGS), 329–351 (VLVNATLLLAVVSLSLPLVAIMG), 393–413 (LLSMAMQLSMSIGVSTAGILL), and 430–450 (SAFLYSYLCMAIIIALPALIF).

It belongs to the major facilitator superfamily. TCR/Tet family.

The protein resides in the cell inner membrane. This Yersinia pseudotuberculosis serotype I (strain IP32953) protein is Putative multidrug resistance protein MdtD.